The primary structure comprises 381 residues: Chaperone protein DnaJ 1 (381 aa).

One can recognise a J domain in the interval 4 to 68 (DYYGLLGVSR…EKRRIVDLGG (65 aa)). The segment at 132–214 (GVTKQVTVDT…CMGDGRVRAR (83 aa)) adopts a CR-type zinc-finger fold. Zn(2+) is bound by residues cysteine 145, cysteine 148, cysteine 162, cysteine 165, cysteine 188, cysteine 191, cysteine 202, and cysteine 205. 4 CXXCXGXG motif repeats span residues 145–152 (CDRCHGKG), 162–169 (CDTCGGRG), 188–195 (CPTCRGVG), and 202–209 (CHQCMGDG).

It belongs to the DnaJ family. As to quaternary structure, homodimer. The cofactor is Zn(2+).

The protein resides in the cytoplasm. Participates actively in the response to hyperosmotic and heat shock by preventing the aggregation of stress-denatured proteins and by disaggregating proteins, also in an autonomous, DnaK-independent fashion. Unfolded proteins bind initially to DnaJ; upon interaction with the DnaJ-bound protein, DnaK hydrolyzes its bound ATP, resulting in the formation of a stable complex. GrpE releases ADP from DnaK; ATP binding to DnaK triggers the release of the substrate protein, thus completing the reaction cycle. Several rounds of ATP-dependent interactions between DnaJ, DnaK and GrpE are required for fully efficient folding. Also involved, together with DnaK and GrpE, in the DNA replication of plasmids through activation of initiation proteins. This is Chaperone protein DnaJ 1 from Mycolicibacterium paratuberculosis (strain ATCC BAA-968 / K-10) (Mycobacterium paratuberculosis).